Reading from the N-terminus, the 368-residue chain is Left-right determination factor 1 (368 aa).

Residues 1 to 21 (MPFLWLCWALWALSLVSLREA) form the signal peptide. The propeptide at 22 to 76 (LTGEQILGSLLQQLQLDQPPVLDKADVEGMVIPSHVRTQYVALLQHSHASRSRGK) is or 135. Asn158 is a glycosylation site (N-linked (GlcNAc...) asparagine). Disulfide bonds link Cys253/Cys266, Cys265/Cys318, Cys295/Cys353, and Cys299/Cys355.

Belongs to the TGF-beta family. Post-translationally, the processing of the protein may also occur at the second R-X-X-R site located at AA 132-135. Processing appears to be regulated in a cell-type specific manner.

The protein localises to the secreted. Its function is as follows. Required for left-right axis determination as a regulator of LEFTY2 and NODAL. In Mus musculus (Mouse), this protein is Left-right determination factor 1 (Lefty1).